Consider the following 270-residue polypeptide: Centromere protein Q (270 aa).

The disordered stretch occupies residues 1-59 (MSGKANTSKKKSQRVKRNVKQRADKEDEELDSPENKVGNRAKRNRSHAGHLSSKEQTKC). Composition is skewed to basic residues over residues 7–20 (TSKK…RNVK) and 39–48 (NRAKRNRSHA). Ser-52 is modified (phosphoserine). Positions 143 to 205 (LKVEREQERA…EEEMKEVFHI (63 aa)) form a coiled coil.

Belongs to the CENP-Q/OKP1 family. Component of the CENPA-CAD complex, composed of CENPI, CENPK, CENPL, CENPO, CENPP, CENPQ, CENPR and CENPS. The CENPA-CAD complex interacts with the CENPA-NAC complex, at least composed of CENPA, CENPC, CENPH, CENPM, CENPN, CENPT and CENPU. Phosphorylation at Ser-52 is essential for CENPE recruitment to kinetochores and orderly chromosome congression.

It is found in the nucleus. It localises to the chromosome. The protein resides in the centromere. In terms of biological role, component of the CENPA-CAD (nucleosome distal) complex, a complex recruited to centromeres which is involved in assembly of kinetochore proteins, mitotic progression and chromosome segregation. May be involved in incorporation of newly synthesized CENPA into centromeres via its interaction with the CENPA-NAC complex. Plays an important role in chromosome congression and in the recruitment of CENP-O complex (which comprises CENPO, CENPP, CENPQ and CENPU), CENPE and PLK1 to the kinetochores. The sequence is that of Centromere protein Q (Cenpq) from Rattus norvegicus (Rat).